The primary structure comprises 64 residues: Conotoxin Pu3.4 (64 aa).

An N-terminal signal peptide occupies residues 1–16; the sequence is LGVLLPICLLLFPLTA. Positions 17–49 are excised as a propeptide; it reads LPLDGDQPADRPAERMQDDFITEQHPLFDPVKR. Intrachain disulfides connect Cys50–Cys63, Cys51–Cys59, and Cys55–Cys62. Pro61 carries the post-translational modification 4-hydroxyproline.

The protein belongs to the conotoxin M superfamily. Expressed by the venom duct.

The protein resides in the secreted. This chain is Conotoxin Pu3.4, found in Conus pulicarius (Flea-bitten cone).